The sequence spans 312 residues: Methionyl-tRNA formyltransferase (312 aa).

Residue 109 to 112 (SLLP) coordinates (6S)-5,6,7,8-tetrahydrofolate.

The protein belongs to the Fmt family.

It catalyses the reaction L-methionyl-tRNA(fMet) + (6R)-10-formyltetrahydrofolate = N-formyl-L-methionyl-tRNA(fMet) + (6S)-5,6,7,8-tetrahydrofolate + H(+). Its function is as follows. Attaches a formyl group to the free amino group of methionyl-tRNA(fMet). The formyl group appears to play a dual role in the initiator identity of N-formylmethionyl-tRNA by promoting its recognition by IF2 and preventing the misappropriation of this tRNA by the elongation apparatus. The sequence is that of Methionyl-tRNA formyltransferase from Listeria innocua serovar 6a (strain ATCC BAA-680 / CLIP 11262).